Reading from the N-terminus, the 247-residue chain is Homeobox-leucine zipper protein HOX15 (247 aa).

The interval 1-44 (MAQDDEDVGLALGLSLGSGGHRRQRESRDEAPSSAAASLLTLRL) is disordered. Over residues 32–44 (PSSAAASLLTLRL) the composition is skewed to low complexity. Positions 91–150 (NSRKKLRLSKEQSALLEDRFKEHSTLNPKQKVALAKQLNLRPRQVEVWFQNRRARTKLKQ) form a DNA-binding region, homeobox. Residues 149–193 (KQTEVDCELLKRCCETLTEENRRLHRELQQLRALTHSTAAGFFMA) are leucine-zipper. The disordered stretch occupies residues 221 to 247 (SPTAAADRTNKPTAPHLFSPFAKSAAC).

This sequence belongs to the HD-ZIP homeobox family. Class II subfamily. Expressed in seedlings, stems, leaf blades and panicles.

The protein localises to the nucleus. Probable transcription factor. This chain is Homeobox-leucine zipper protein HOX15 (HOX15), found in Oryza sativa subsp. japonica (Rice).